We begin with the raw amino-acid sequence, 62 residues long: Coiled-coil domain-containing protein YLR146W-A (62 aa).

The stretch at 14-49 (EHARMLQNEIQQLFAQLRDTNSQIRCDLNEFEQIKE) forms a coiled coil.

The sequence is that of Coiled-coil domain-containing protein YLR146W-A from Saccharomyces cerevisiae (strain ATCC 204508 / S288c) (Baker's yeast).